The primary structure comprises 399 residues: uncharacterized protein (399 aa).

It belongs to the TelA family.

This is an uncharacterized protein from Listeria monocytogenes serovar 1/2a (strain ATCC BAA-679 / EGD-e).